Here is a 569-residue protein sequence, read N- to C-terminus: MGQTSVSALSPQPGSVDGLDKASIANSDGPPAGSQTPPFKRKGKLSTIGKIFKPWKWRKEKTSDKFRETSAVLERKISTRQSREELIRRGLLKELPDQDGDVTVNFENSNGHMIHIGEEATQEENVGKPEEGNVSVCEKGPPREEQAEEKTAGSSHPKKTTGSKASSSPSASSTSSHPRGPKESLTGKAGAVGTTRGKKKISKQPAAAASRLSPNTVTSETSSLKGELSDTGVESLKPEETVAGAEEEATGKPKAVVVALPPVTVPPSSPALPLPPEDPCTIALDTPMVLVSDGPTLPISALETSPLPGTEEPANRTTPYSSTGLGGSREQAKCFTTKDGLGKAGPQLLTPGQMGDSLESFSAPEDEAPREYQANDSDSDGPILYTDDDDEEDDDDDSTGESALASKIRRRDTLAIKLGNRPSKKELEDKNILQRTSEEERQELRQQIGTKLVRRLSQRPTTEELEQRSILKQKNEEEEQEAKMELKRRLSRKLSLRPTVPELQARRILRFNEYVEVTDSPDYDRRADKPWARLTPADKAAIRKELNEFKSTEMEVHEESRQFTRFHRP.

Residues 1 to 13 show a composition bias toward polar residues; the sequence is MGQTSVSALSPQP. A disordered region spans residues 1-47; it reads MGQTSVSALSPQPGSVDGLDKASIANSDGPPAGSQTPPFKRKGKLST. A Phosphoserine modification is found at S27. T36 carries the phosphothreonine modification. Residues 71–96 form an RPEL 1 repeat; it reads AVLERKISTRQSREELIRRGLLKELP. Disordered stretches follow at residues 98–253 and 295–483; these read QDGD…TGKP and PTLP…QEAK. The span at 140–151 shows a compositional bias: basic and acidic residues; that stretch reads GPPREEQAEEKT. A compositionally biased stretch (low complexity) spans 162-176; that stretch reads GSKASSSPSASSTSS. The segment covering 212-224 has biased composition (polar residues); it reads LSPNTVTSETSSL. S357 is subject to Phosphoserine. Acidic residues predominate over residues 386-399; it reads TDDDDEEDDDDDST. RPEL repeat units follow at residues 412 to 437, 450 to 475, and 488 to 513; these read DTLAIKLGNRPSKKELEDKNILQRTS, TKLVRRLSQRPTTEELEQRSILKQKN, and RRLSRKLSLRPTVPELQARRILRFNE. Over residues 423–444 the composition is skewed to basic and acidic residues; that stretch reads SKKELEDKNILQRTSEEERQEL. Phosphoserine is present on S457. Positions 461–483 are enriched in basic and acidic residues; that stretch reads TTEELEQRSILKQKNEEEEQEAK. S495 is subject to Phosphoserine.

This sequence belongs to the phosphatase and actin regulator family. As to quaternary structure, binds PPP1CA and actin. As to expression, expressed in the brain with high levels in the cerebellum, specifically in the Purkinje cell layer, choroid plexus and thalamus (ventral, rhomboid and anterior nuclei). Moderate to high expression in the hippocampus, piriform cortex, olfactory bulb, entorhinal cortex, as well as in geniculate bodies, lamboid septal zone, preoptic area and ventral pallidum (at protein level).

This Rattus norvegicus (Rat) protein is Phosphatase and actin regulator 2 (Phactr2).